The sequence spans 262 residues: MENSFKAALKAGRPQIGLWLGLSSSYSAELLAGAGFDWLLSDGEHAPNNVQTVLTQLQAIAPYPSQPVVRPSWNDPVQIKQLLDVGTQTLLVPMVQNADEAREAVRATRYPPAGIRGVGSALARASRWNRIPDYLQKANDQMCVLVQIETREAMKNLPQILDVEGVDGVFIGPADLSADMGYAGNPQHPEVQAAIEQAIVQIRESGKAPGILIANEQLAKRYLELGALFVAVGVDTTLLARAAEALAARFGAQATAVKPGVY.

Residue H45 is the Proton acceptor of the active site. Q147 is a substrate binding site. Residue E149 participates in a divalent metal cation binding. Residues A174 and D175 each contribute to the substrate site. Residue D175 coordinates a divalent metal cation.

Belongs to the HpcH/HpaI aldolase family. Homohexamer; trimer of dimers. It depends on a divalent metal cation as a cofactor.

It carries out the reaction 4-hydroxy-2-oxoheptanedioate = succinate semialdehyde + pyruvate. It functions in the pathway aromatic compound metabolism; 4-hydroxyphenylacetate degradation; pyruvate and succinate semialdehyde from 4-hydroxyphenylacetate: step 7/7. Its function is as follows. Catalyzes the reversible retro-aldol cleavage of 4-hydroxy-2-ketoheptane-1,7-dioate (HKHD) to pyruvate and succinic semialdehyde. The sequence is that of 4-hydroxy-2-oxo-heptane-1,7-dioate aldolase from Shigella boydii serotype 4 (strain Sb227).